The following is a 63-amino-acid chain: Large ribosomal subunit protein bL28 (63 aa).

The protein belongs to the bacterial ribosomal protein bL28 family.

In Desulforudis audaxviator (strain MP104C), this protein is Large ribosomal subunit protein bL28.